Reading from the N-terminus, the 630-residue chain is Eukaryotic translation initiation factor 2-alpha kinase 1 (630 aa).

A disordered region spans residues Met1–Glu40. The SIFI-degron signature appears at Leu85 to Leu104. The region spanning Phe167–Phe583 is the Protein kinase domain. Residues Leu173–Val181 and Lys196 each bind ATP. A disordered region spans residues Asp259–Asn301. Thr285 bears the Phosphothreonine mark. Positions Thr285–Glu294 are enriched in basic and acidic residues. An HRM 1 repeat occupies Ala410 to Met415. Catalysis depends on Asp442, which acts as the Proton acceptor. 2 positions are modified to phosphothreonine; by autocatalysis: Thr486 and Thr488. Thr493 carries the post-translational modification Phosphothreonine. An HRM 2 repeat occupies Arg552–Ala557.

It belongs to the protein kinase superfamily. Ser/Thr protein kinase family. GCN2 subfamily. Synthesized in an inactive form that binds to the N-terminal domain of CDC37. Has to be associated with a multiprotein complex containing Hsp90, CDC37 and PPP5C for maturation and activation by autophosphorylation. The phosphatase PPP5C modulates this activation. Homodimer; homodimerizes in presence of heme, forming a disulfide-linked inactive homodimer. Interacts with DELE1; binds both to full-length DELE1 and processed form of DELE1 (S-DELE1) in response to stress, leading to activate its protein kinase activity and trigger the integrated stress response (ISR). In terms of processing, activated by autophosphorylation; phosphorylated predominantly on serine and threonine residues, but also on tyrosine residues. Autophosphorylation at Thr-488 is required for kinase activation. The active autophosphorylated form apparently is largely refractory to cellular heme fluctuations. Ubiquitinated and degraded by the SIFI complex once the mitochondrial stress has been resolved, thereby providing stress response silencing. Within the SIFI complex, UBR4 initiates ubiquitin chain that are further elongated or branched by KCMF1.

The enzyme catalyses L-seryl-[protein] + ATP = O-phospho-L-seryl-[protein] + ADP + H(+). It carries out the reaction L-threonyl-[protein] + ATP = O-phospho-L-threonyl-[protein] + ADP + H(+). In normal conditions, the protein kinase activity is inhibited; inhibition is relieved by various stress conditions. Inhibited by heme: in presence of heme, forms a disulfide-linked inactive homodimer. Heme depletion relieves inhibition and stimulates kinase activity by autophosphorylation. Inhibited by the heme metabolites biliverdin and bilirubin. Induced by oxidative stress generated by arsenite treatment. Binding of nitric oxide (NO) to the heme iron in the N-terminal heme-binding domain activates the kinase activity, while binding of carbon monoxide (CO) suppresses kinase activity. Protein kinase activity is also activated upon binding to DELE1 in response to various stress, triggering the integrated stress response (ISR): activated by full-length DELE1 in response to iron deficiency, while it is activated by the processed form of DELE1 (S-DELE1) in response to mitochondrial stress. Its function is as follows. Metabolic-stress sensing protein kinase that phosphorylates the alpha subunit of eukaryotic translation initiation factor 2 (EIF2S1/eIF-2-alpha) in response to various stress conditions. Key activator of the integrated stress response (ISR) required for adaptation to various stress, such as heme deficiency, oxidative stress, osmotic shock, mitochondrial dysfunction and heat shock. EIF2S1/eIF-2-alpha phosphorylation in response to stress converts EIF2S1/eIF-2-alpha in a global protein synthesis inhibitor, leading to a global attenuation of cap-dependent translation, while concomitantly initiating the preferential translation of ISR-specific mRNAs, such as the transcriptional activator ATF4, and hence allowing ATF4-mediated reprogramming. Acts as a key sensor of heme-deficiency: in normal conditions, binds hemin via a cysteine thiolate and histidine nitrogenous coordination, leading to inhibit the protein kinase activity. This binding occurs with moderate affinity, allowing it to sense the heme concentration within the cell: heme depletion relieves inhibition and stimulates kinase activity, activating the ISR. Thanks to this unique heme-sensing capacity, plays a crucial role to shut off protein synthesis during acute heme-deficient conditions. In red blood cells (RBCs), controls hemoglobin synthesis ensuring a coordinated regulation of the synthesis of its heme and globin moieties. It thereby plays an essential protective role for RBC survival in anemias of iron deficiency. Iron deficiency also triggers activation by full-length DELE1. Also activates the ISR in response to mitochondrial dysfunction: HRI/EIF2AK1 protein kinase activity is activated upon binding to the processed form of DELE1 (S-DELE1), thereby promoting the ATF4-mediated reprogramming. Also acts as an activator of mitophagy in response to mitochondrial damage: catalyzes phosphorylation of eIF-2-alpha (EIF2S1) following activation by S-DELE1, thereby promoting mitochondrial localization of EIF2S1, triggering PRKN-independent mitophagy. This is Eukaryotic translation initiation factor 2-alpha kinase 1 from Homo sapiens (Human).